The following is a 192-amino-acid chain: Ion-translocating oxidoreductase complex subunit B (192 aa).

A hydrophobic region spans residues methionine 1–serine 26. The 4Fe-4S domain occupies glutamate 32–valine 91. Positions 49, 52, 57, 74, 117, 120, 123, 127, 147, 150, 153, and 157 each coordinate [4Fe-4S] cluster. 2 4Fe-4S ferredoxin-type domains span residues methionine 108–arginine 137 and alanine 138–valine 167.

This sequence belongs to the 4Fe4S bacterial-type ferredoxin family. RnfB subfamily. In terms of assembly, the complex is composed of six subunits: RsxA, RsxB, RsxC, RsxD, RsxE and RsxG. The cofactor is [4Fe-4S] cluster.

The protein localises to the cell inner membrane. Its function is as follows. Part of a membrane-bound complex that couples electron transfer with translocation of ions across the membrane. Required to maintain the reduced state of SoxR. This is Ion-translocating oxidoreductase complex subunit B from Escherichia coli O81 (strain ED1a).